Here is a 520-residue protein sequence, read N- to C-terminus: Cytochrome P450 72A68 (520 aa).

A helical transmembrane segment spans residues 11–31; that stretch reads IILITVTFGLVYAWRVLNWMW. Cysteine 466 contributes to the heme binding site.

This sequence belongs to the cytochrome P450 family. The cofactor is heme.

Its subcellular location is the membrane. It carries out the reaction oleanolate + 3 reduced [NADPH--hemoprotein reductase] + 3 O2 = gypsogenate + 3 oxidized [NADPH--hemoprotein reductase] + 4 H2O + 4 H(+). Its function is as follows. Catalyzes the carboxylation of oleanolic acid at the C-23 position to form gypsogenic acid. Involved in the hemolytic saponin biosynthetic pathway. The chain is Cytochrome P450 72A68 from Medicago truncatula (Barrel medic).